Consider the following 180-residue polypeptide: Small ribosomal subunit protein uS5 (180 aa).

An S5 DRBM domain is found at 24-87 (MIEKLVAVNR…EQARKNLVSV (64 aa)).

It belongs to the universal ribosomal protein uS5 family. Part of the 30S ribosomal subunit. Contacts proteins S4 and S8.

Its function is as follows. With S4 and S12 plays an important role in translational accuracy. Located at the back of the 30S subunit body where it stabilizes the conformation of the head with respect to the body. This is Small ribosomal subunit protein uS5 from Stenotrophomonas maltophilia (strain R551-3).